The following is a 147-amino-acid chain: Hemoglobin subunit beta (147 aa).

At V2 the chain carries N-acetylvaline. The Globin domain maps to H3–H147. Phosphothreonine is present on T13. S45 carries the post-translational modification Phosphoserine. At K60 the chain carries N6-acetyllysine. H64 is a heme b binding site. K83 bears the N6-acetyllysine mark. H93 lines the heme b pocket. C94 is subject to S-nitrosocysteine. N6-acetyllysine is present on K145.

This sequence belongs to the globin family. In terms of assembly, heterotetramer of two alpha chains and two beta chains. As to expression, red blood cells.

Involved in oxygen transport from the lung to the various peripheral tissues. The polypeptide is Hemoglobin subunit beta (HBB) (Papio anubis (Olive baboon)).